The chain runs to 120 residues: Large ribosomal subunit protein bL12 (120 aa).

It belongs to the bacterial ribosomal protein bL12 family. As to quaternary structure, homodimer. Part of the ribosomal stalk of the 50S ribosomal subunit. Forms a multimeric L10(L12)X complex, where L10 forms an elongated spine to which 2 to 4 L12 dimers bind in a sequential fashion. Binds GTP-bound translation factors.

Its function is as follows. Forms part of the ribosomal stalk which helps the ribosome interact with GTP-bound translation factors. Is thus essential for accurate translation. This is Large ribosomal subunit protein bL12 from Clostridium botulinum (strain Alaska E43 / Type E3).